A 37-amino-acid chain; its full sequence is Large ribosomal subunit protein bL36c (37 aa).

This sequence belongs to the bacterial ribosomal protein bL36 family.

The protein resides in the plastid. Its subcellular location is the chloroplast. In Phaeodactylum tricornutum (strain CCAP 1055/1), this protein is Large ribosomal subunit protein bL36c.